Here is a 381-residue protein sequence, read N- to C-terminus: Homoserine O-succinyltransferase (381 aa).

The 316-residue stretch at 45 to 360 folds into the AB hydrolase-1 domain; it reads NAVLVCHALN…PHGHDAFLLD (316 aa). The active-site Nucleophile is Ser-151. Position 221 (Arg-221) interacts with substrate. Active-site residues include Asp-321 and His-354. A substrate-binding site is contributed by Asp-355.

The protein belongs to the AB hydrolase superfamily. MetX family. In terms of assembly, homodimer.

Its subcellular location is the cytoplasm. The enzyme catalyses L-homoserine + succinyl-CoA = O-succinyl-L-homoserine + CoA. The protein operates within amino-acid biosynthesis; L-methionine biosynthesis via de novo pathway; O-succinyl-L-homoserine from L-homoserine: step 1/1. Its function is as follows. Transfers a succinyl group from succinyl-CoA to L-homoserine, forming succinyl-L-homoserine. The protein is Homoserine O-succinyltransferase of Burkholderia ambifaria (strain MC40-6).